Consider the following 212-residue polypeptide: Fibroblast growth factor 8b (212 aa).

The first 27 residues, 1–27, serve as a signal peptide directing secretion; sequence MRLKSSRLGYLFLQFMTLCFYTQMTMQ. A glycan (N-linked (GlcNAc...) asparagine) is linked at Asn-139.

Belongs to the heparin-binding growth factors family.

It is found in the secreted. Its function is as follows. May act as signaling molecule during development of the midbrain-hindbrain boundary (MHB) organizer, and be involved in patterning of the nervous system. This chain is Fibroblast growth factor 8b (fgf8b), found in Danio rerio (Zebrafish).